A 70-amino-acid polypeptide reads, in one-letter code: Turripeptide Lol9.1 (70 aa).

The first 20 residues, 1 to 20, serve as a signal peptide directing secretion; it reads MKVYCLLLVLLVGLVSQAHG. A Kazal-like domain is found at 21-70; the sequence is KPTKRCLSVCSAEYEPVCGSDGKTYANKCHLMTEACWSPTSITLVHEGKC. 3 disulfides stabilise this stretch: Cys-26–Cys-56, Cys-30–Cys-49, and Cys-38–Cys-70.

Belongs to the conopeptide P-like superfamily. Expressed by the venom duct.

The protein localises to the secreted. In terms of biological role, acts as a neurotoxin by inhibiting an ion channel. May also act as a serine protease inhibitor, since it possess the kazal serine protease inhibitor signature. The polypeptide is Turripeptide Lol9.1 (Iotyrris olangoensis (Sea snail)).